The sequence spans 1239 residues: Zinc finger and BTB domain-containing protein 40 (1239 aa).

The BTB domain maps to 24-87 (CDCTISIGTI…MYTGKLPVGK (64 aa)). 3 disordered regions span residues 130-231 (SAPS…TSTE), 687-732 (HLEA…PDPA), and 779-801 (KELD…PKKK). Residues 136 to 145 (TFRKEPEKPQ) show a composition bias toward basic and acidic residues. The span at 181-199 (SVSQEMSVNSPTAQESQRN) shows a compositional bias: polar residues. Phosphoserine is present on S190. Low complexity predominate over residues 200 to 212 (AETPAETPTTAEA). The segment covering 687–703 (HLEANNKEDEKAAKEDS) has biased composition (basic and acidic residues). Position 703 is a phosphoserine (S703). Polar residues predominate over residues 705 to 719 (PGEQNDQGETGSLPG). 10 C2H2-type zinc fingers span residues 807–830 (VTCD…LTEH), 836–858 (FSCE…LRLH), 864–887 (FMCK…KKKH), 893–915 (YACQ…VRTH), 921–944 (YVCR…HTFH), 950–973 (YDCK…HEVH), 978–1000 (HPCP…VVTH), 1006–1029 (FSCG…RTHH), 1046–1069 (LQCS…KAEH), and 1075–1098 (HECD…KCQH). Residue K1066 forms a Glycyl lysine isopeptide (Lys-Gly) (interchain with G-Cter in SUMO2) linkage. A C2H2-type 11; atypical zinc finger spans residues 1104–1127 (FRCLYCAATFRFPGALQHHVTTEH). A C2H2-type 12 zinc finger spans residues 1135 to 1158 (FPCELCGELFTSQAQLDSHLESEH).

The protein belongs to the krueppel C2H2-type zinc-finger protein family.

The protein localises to the nucleus. Its function is as follows. May be involved in transcriptional regulation. The sequence is that of Zinc finger and BTB domain-containing protein 40 (ZBTB40) from Homo sapiens (Human).